The sequence spans 651 residues: Threonine--tRNA ligase (651 aa).

The 64-residue stretch at methionine 1 to threonine 64 folds into the TGS domain. The tract at residues aspartate 245–proline 535 is catalytic. The Zn(2+) site is built by cysteine 336, histidine 387, and histidine 512.

It belongs to the class-II aminoacyl-tRNA synthetase family. As to quaternary structure, homodimer. It depends on Zn(2+) as a cofactor.

Its subcellular location is the cytoplasm. The catalysed reaction is tRNA(Thr) + L-threonine + ATP = L-threonyl-tRNA(Thr) + AMP + diphosphate + H(+). In terms of biological role, catalyzes the attachment of threonine to tRNA(Thr) in a two-step reaction: L-threonine is first activated by ATP to form Thr-AMP and then transferred to the acceptor end of tRNA(Thr). Also edits incorrectly charged L-seryl-tRNA(Thr). This Symbiobacterium thermophilum (strain DSM 24528 / JCM 14929 / IAM 14863 / T) protein is Threonine--tRNA ligase.